The sequence spans 387 residues: Protein kinase gsk3 (387 aa).

The 285-residue stretch at 32-316 (YTSSKVVGSG…AAEAMCHPFF (285 aa)) folds into the Protein kinase domain. ATP-binding positions include 38 to 46 (VGSGSFGVV) and Lys61. Asp157 serves as the catalytic Proton acceptor. Ser191 is modified (phosphoserine). At Tyr192 the chain carries Phosphotyrosine; by autocatalysis. Ser335 bears the Phosphoserine mark.

Belongs to the protein kinase superfamily. CMGC Ser/Thr protein kinase family. GSK-3 subfamily. Autophosphorylated on tyrosine residues.

Its subcellular location is the cytoplasm. The protein resides in the nucleus. It catalyses the reaction L-seryl-[protein] + ATP = O-phospho-L-seryl-[protein] + ADP + H(+). It carries out the reaction L-threonyl-[protein] + ATP = O-phospho-L-threonyl-[protein] + ADP + H(+). Functionally, interacts with cdc14 which is thought to play a role in the initiation and completion of mitosis. Involved in the positive regulation of mis12. In Schizosaccharomyces pombe (strain 972 / ATCC 24843) (Fission yeast), this protein is Protein kinase gsk3 (gsk3).